A 267-amino-acid polypeptide reads, in one-letter code: Serine/arginine-rich splicing factor 7 (267 aa).

Residues 40–113 (TKVYVGNLGT…SRVRVELSTG (74 aa)) enclose the RRM domain. An N6-acetyllysine; alternate modification is found at K53. K53 is covalently cross-linked (Glycyl lysine isopeptide (Lys-Gly) (interchain with G-Cter in SUMO2); alternate). Residue S61 is modified to Phosphoserine. Residues 110–127 (LSTGMPRRSRFDRPPARR) are sufficient for interaction with NXF1. A CCHC-type zinc finger spans residues 133–150 (DRCYECGEKGHYAYDCHR). Residues 152-209 (SRRRRSRSRSRSHSRSRGRRYSRSRSRSRGRRSRSASPRRSRSVSLRRSRSASLRRSR) are compositionally biased toward basic residues. The tract at residues 152-267 (SRRRRSRSRS…HRSASPERMD (116 aa)) is disordered. 4 tandem repeats follow at residues 182–189 (RRSRSASP), 190–197 (RRSRSVSL), 198–205 (RRSRSASL), and 206–213 (RRSRSGSI). The 6 X 8 AA repeats of R-R-S-R-S-X-S-X stretch occupies residues 182-255 (RRSRSASPRR…SPKRSRSPSG (74 aa)). A phosphoserine mark is found at S192, S194, and S196. Phosphoserine occurs at positions 210, 212, 221, 223, and 225. A compositionally biased stretch (basic residues) spans 223–251 (SRSRSRSRSISRPRSSRSKSRSPSPKRSR). One copy of the 5; approximate repeat lies at 240-247 (SKSRSPSP). Residues 248-255 (KRSRSPSG) form a 6; approximate repeat. A phosphoserine mark is found at S260 and S262.

The protein belongs to the splicing factor SR family. Found in large molecular weight complexes containing CCNL1 and the p110 isoforms of either CDC2L1 or CDC2L2. Interacts with CCNL2 and CPSF6. Interacts with NXF1. Interacts with YTHDC1. Post-translationally, extensively phosphorylated on serine residues in the RS domain.

The protein localises to the nucleus. Its subcellular location is the cytoplasm. In terms of biological role, required for pre-mRNA splicing. Represses the splicing of MAPT/Tau exon 10. May function as export adapter involved in mRNA nuclear export such as of histone H2A. Binds mRNA which is thought to be transferred to the NXF1-NXT1 heterodimer for export (TAP/NXF1 pathway); enhances NXF1-NXT1 RNA-binding activity. RNA-binding is semi-sequence specific. This Mus musculus (Mouse) protein is Serine/arginine-rich splicing factor 7 (Srsf7).